A 785-amino-acid chain; its full sequence is Rho GTPase-activating protein 10 (785 aa).

The BAR domain occupies 7 to 262 (EFSDCYLDSP…IRQNPKDHKR (256 aa)). The 108-residue stretch at 265-372 (QFTAEGYLYV…WLEVLGGKEA (108 aa)) folds into the PH domain. One can recognise a Rho-GAP domain in the interval 389–574 (AQLDKMGFTI…ILIENHEKIF (186 aa)). The interval 576-708 (TPPDATLPEP…PAVTPPSPKL (133 aa)) is disordered. Residues 584–595 (EPGPLSAPPNAP) show a composition bias toward pro residues. Residues 598-608 (QSKRQGQRTKR) show a composition bias toward basic residues. Residues 622-632 (GDRPSLPKEDT) are compositionally biased toward basic and acidic residues. The segment covering 633-650 (PPSSLDSLSSPSPTTATA) has biased composition (low complexity). Positions 675–697 (APSQARSSAVQWLNPQSPTTPSC) are enriched in polar residues. Residues 727 to 785 (IISRKARAVYPCEAEHSSELSFEIGAIFEDVQTSREPGWLEGTLNGKRGLIPQNYVKLL) enclose the SH3 domain.

As to quaternary structure, interacts with PKN3. Interacts with caspase-activated PAK2 proteolytic fragment PAK-2p34; the interaction does not affect ARHGAP10 GTPase activation activity towards RHOA and CDC42. Interacts via its SH3 domain with PTK2/FAK1. Interacts with PTK2B/PYK2; the interaction negatively regulates ARHGAP10 GTPase-activating activity. Interacts with MICAL1 and WDR44; complex formation might transit from GRAF2/ARHGAP10-MICAL1 to GRAF2/ARHGAP10-WDR44 complexes.

The protein localises to the cytoplasm. It localises to the perinuclear region. It is found in the cell membrane. Its subcellular location is the endosome membrane. In terms of biological role, GTPase-activating protein that catalyzes the conversion of active GTP-bound Rho GTPases to their inactive GDP-bound form, thus suppressing various Rho GTPase-mediated cellular processes. Also converts Cdc42 to an inactive GDP-bound state. Essential for PTKB2 regulation of cytoskeletal organization via Rho family GTPases. Inhibits PAK2 proteolytic fragment PAK-2p34 kinase activity and changes its localization from the nucleus to the perinuclear region. Stabilizes PAK-2p34 thereby increasing stimulation of cell death. Associates with MICAL1 on the endosomal membrane to promote Rab8-Rab10-dependent tubule extension. After dissociation with MICAL1, recruits WDR44 which connects the endoplasmic reticulum (ER) with the endosomal tubule, thereby participating in the export of a subset of neosynthesized proteins. The chain is Rho GTPase-activating protein 10 (ARHGAP10) from Bos taurus (Bovine).